A 418-amino-acid chain; its full sequence is Tektin-1 (418 aa).

Coiled coils occupy residues 21–107 (KNQY…TLKE), 134–177 (HELI…DLKD), 266–308 (NGLK…DQEG), and 333–384 (AQYR…NTIY).

It belongs to the tektin family. Microtubule inner protein component of sperm flagellar doublet microtubules. In terms of processing, ubiquitinated, leading to its degradation. Deubiquitinated by USP16, promoting its stability. Predominantly expressed in testis. Expressed in airway epithelial cells.

The protein resides in the cytoplasm. The protein localises to the cytoskeleton. It localises to the cilium axoneme. It is found in the flagellum axoneme. Microtubule inner protein (MIP) part of the dynein-decorated doublet microtubules (DMTs) in cilia and flagellar axoneme. Forms filamentous polymers in the walls of ciliary and flagellar microtubules. The protein is Tektin-1 (TEKT1) of Homo sapiens (Human).